The following is a 537-amino-acid chain: Chaperonin GroEL (537 aa).

ATP-binding positions include 29-32 (TLGP), 86-90 (DGTTT), G413, and D492.

This sequence belongs to the chaperonin (HSP60) family. In terms of assembly, forms a cylinder of 14 subunits composed of two heptameric rings stacked back-to-back. Interacts with the co-chaperonin GroES.

It is found in the cytoplasm. It carries out the reaction ATP + H2O + a folded polypeptide = ADP + phosphate + an unfolded polypeptide.. Functionally, together with its co-chaperonin GroES, plays an essential role in assisting protein folding. The GroEL-GroES system forms a nano-cage that allows encapsulation of the non-native substrate proteins and provides a physical environment optimized to promote and accelerate protein folding. The chain is Chaperonin GroEL from Dehalococcoides mccartyi (strain ATCC BAA-2266 / KCTC 15142 / 195) (Dehalococcoides ethenogenes (strain 195)).